The primary structure comprises 477 residues: Glutamyl-tRNA reductase (477 aa).

Substrate is bound by residues 49 to 52 (TCNR), S109, 114 to 116 (EQQ), and Q120. C50 serves as the catalytic Nucleophile. Residue 189–194 (GAGAMG) coordinates NADP(+).

Belongs to the glutamyl-tRNA reductase family. In terms of assembly, homodimer.

It carries out the reaction (S)-4-amino-5-oxopentanoate + tRNA(Glu) + NADP(+) = L-glutamyl-tRNA(Glu) + NADPH + H(+). Its pathway is porphyrin-containing compound metabolism; protoporphyrin-IX biosynthesis; 5-aminolevulinate from L-glutamyl-tRNA(Glu): step 1/2. Its function is as follows. Catalyzes the NADPH-dependent reduction of glutamyl-tRNA(Glu) to glutamate 1-semialdehyde (GSA). This Nocardia farcinica (strain IFM 10152) protein is Glutamyl-tRNA reductase.